The following is a 309-amino-acid chain: MEKFEVHILGCGSALPTTRHFATSQVVNIREKLFMIDCGEGAQMQLRKSKLKFTRLNHIFISHLHGDHCFGLMGLISTFGMLGRTATLYIHCHAELERLLTPQLDFFCKGMSYKVVFQTFDPGKAEIIYDDRSLTIETIPLRHRIPTCGFLFSEKQIPAHIRRDMIDFYEIPVYELNRIKNGADYTLPDGKIVPNNKLTIPSALPRRYAYCSDTIYLPHIIEQIYGVDLLFHEATFAQSEQARAKETFHTTASQAGEIARTAKVKQLLIGHFSARYEDESILLQEASDIFPNTLLARETLKISIESIKP.

Residues histidine 63, histidine 65, aspartate 67, histidine 68, histidine 143, aspartate 213, and histidine 271 each coordinate Zn(2+). The Proton acceptor role is filled by aspartate 67.

The protein belongs to the RNase Z family. As to quaternary structure, homodimer. Requires Zn(2+) as cofactor.

It catalyses the reaction Endonucleolytic cleavage of RNA, removing extra 3' nucleotides from tRNA precursor, generating 3' termini of tRNAs. A 3'-hydroxy group is left at the tRNA terminus and a 5'-phosphoryl group is left at the trailer molecule.. In terms of biological role, zinc phosphodiesterase, which displays some tRNA 3'-processing endonuclease activity. Probably involved in tRNA maturation, by removing a 3'-trailer from precursor tRNA. This Phocaeicola vulgatus (strain ATCC 8482 / DSM 1447 / JCM 5826 / CCUG 4940 / NBRC 14291 / NCTC 11154) (Bacteroides vulgatus) protein is Ribonuclease Z.